The primary structure comprises 138 residues: MAAKVASGTNKVFQNHDDVHISFEDQQRINRFAKHNARMDDFKAELETKRNELKSLEEALEEIELFDEDEDIPFLVGEVFLSHKLEKTQDMLKETKEQVLKEIAGVEAKAKVIKAEMDELKAHLYQRFGSNISLEAED.

Belongs to the prefoldin subunit beta family. In terms of assembly, heterohexamer of two PFD-alpha type and four PFD-beta type subunits.

Its function is as follows. Binds specifically to cytosolic chaperonin (c-CPN) and transfers target proteins to it. Binds to nascent polypeptide chain and promotes folding in an environment in which there are many competing pathways for nonnative proteins. The polypeptide is Probable prefoldin subunit 4 (Drosophila melanogaster (Fruit fly)).